Consider the following 303-residue polypeptide: MVSLSCLISYGECLLETVQTHPWSTIGVVVFLSSVKNAPLMWHARLIIAVFYHSVTRKNDVVTIERYGRQGLFGYIVTSSRSPLYECDINGHKSDSTYFSDLDINRIHLITRLFKGAGDLSLRPDRPNVAPEDRPKKMRVLLGGTCCSFRREIKPYAAYEIHSRVLAWDEKWLYVVSYFVKPGSARKMASLQTEVGDKCEMTDLARSMVFTSAITKFVFKDGRKTVRPADALEEMGLLSASEEVVETSEAGEDLWTRSRVEERRKTGIKIAQHFIALDELHDQFEHVSEHPFLGKFGVLGTMF.

It belongs to the lcsJ thioesterase family.

Its pathway is secondary metabolite biosynthesis. Its function is as follows. Thioesterase; part of the gene cluster that mediates the biosynthesis of oxaleimides, cytotoxic compounds containing an unusual disubstituted succinimide moiety. The first step of the pathway is provided by the HR-PKS poxF that serves in a new mode of collaborative biosynthesis with the PKS-NRPS poxE, by providing the olefin containing amino acid substrate via the synthesis of an ACP-bound dec-4-enoate. The cytochrome P450 monooxygenase poxM-catalyzed oxidation at the alpha-position creates the enzyme-bound 2-hydroxydec-4-enoyl-ACP thioester, which may be prone to spontaneous hydrolysis to yield 2-hydroxydec-4-enoic acid due to increased electrophilicity of the carbonyl. 2-hydroxydec-4-enoic acid can then be further oxidized by poxM to yield the alpha-ketoacid 2-oxodec-4-enoicacid, which is reductively aminated by the aminotransferase poxL to yield (S,E)-2-aminodec-4-enoic acid. The Hybrid PKS-NRPS synthetase poxE then performs condensation between the octaketide product of its PKS modules and the amino group of (S,E)-2-aminodec-4-enoic acid which is activated and incorporated by the adenylation domain. The resulting aminoacyl product can be cyclized by the Diels-Alderase PoxQ and reductively released by the reductive (R) domain of poxE to yield an aldehyde intermediate. The released aldehyde is then substrate for a Knoevenagel condensation by the hydrolyase poxO followed by an oxidation at the 5-position of the pyrrolidone ring. The presence of the olefin from the amino acid building block allows for migration of the substituted allyl group to occur. This allylic transposition reaction takes place in a conjugate addition, semipinacol-like fashion to yield a succinimide intermediate. Iterative two-electron oxidations of the C7 methyl of the succinimide intermediate to the carboxylic acid can be catalyzed by one of two remaining cytochrome P450 monooxygenasess poxC or poxD to yield oxaleimide A. Subsequent oxidation yields the maleimide scaffold oxaleimide I. Both oxaleimide A and oxaleimide I can undergo oxidative modifications in the decalin ring to yield the series of products oxaleimides B to H. This is Thioesterase poxG from Penicillium oxalicum (strain 114-2 / CGMCC 5302) (Penicillium decumbens).